Here is a 355-residue protein sequence, read N- to C-terminus: 3-dehydroquinate synthase (355 aa).

NAD(+)-binding positions include 105-109 (GVVGD), 129-130 (TS), Lys-142, Lys-151, and 169-172 (TLKT). 3 residues coordinate Zn(2+): Glu-184, His-246, and His-263.

Belongs to the sugar phosphate cyclases superfamily. Dehydroquinate synthase family. NAD(+) serves as cofactor. Co(2+) is required as a cofactor. The cofactor is Zn(2+).

Its subcellular location is the cytoplasm. It catalyses the reaction 7-phospho-2-dehydro-3-deoxy-D-arabino-heptonate = 3-dehydroquinate + phosphate. It participates in metabolic intermediate biosynthesis; chorismate biosynthesis; chorismate from D-erythrose 4-phosphate and phosphoenolpyruvate: step 2/7. Functionally, catalyzes the conversion of 3-deoxy-D-arabino-heptulosonate 7-phosphate (DAHP) to dehydroquinate (DHQ). In Streptococcus agalactiae serotype III (strain NEM316), this protein is 3-dehydroquinate synthase.